The sequence spans 340 residues: NAC domain-containing protein 89 (340 aa).

The NAC domain occupies 21-164 (VFPGFKFSPT…AMVVCRVRRN (144 aa)). Residues 119-170 (IGTKRTLVFHIGRAPKGERTDWIMHEYCVKGVSLDDAMVVCRVRRNKEYNSG) mediate DNA binding. A compositionally biased stretch (polar residues) spans 167–181 (YNSGTSQKAPKPNSS). Residues 167 to 198 (YNSGTSQKAPKPNSSAEKHAKVQNGATSSGSP) are disordered.

Interacts with PAS1.

Its subcellular location is the cytoplasm. The protein resides in the nucleus. Its function is as follows. Transcription factor involved in plant cell division. The protein is NAC domain-containing protein 89 (NAC089) of Arabidopsis thaliana (Mouse-ear cress).